A 256-amino-acid chain; its full sequence is uncharacterized protein (256 aa).

9–33 is an NADP(+) binding site; sequence VTGGGQGIGAAIAQLFAENGMKVVI. S140 lines the substrate pocket. Y153 functions as the Proton acceptor in the catalytic mechanism.

This sequence belongs to the short-chain dehydrogenases/reductases (SDR) family.

This is an uncharacterized protein from Thermotoga maritima (strain ATCC 43589 / DSM 3109 / JCM 10099 / NBRC 100826 / MSB8).